The sequence spans 27 residues: Voltage-dependent anion-selective channel protein (27 aa).

Belongs to the eukaryotic mitochondrial porin family. As to quaternary structure, interacts with hexokinases. Photoreceptors.

It is found in the mitochondrion outer membrane. Forms a channel through the cell membrane that allows diffusion of small hydrophilic molecules. This is Voltage-dependent anion-selective channel protein from Doryteuthis pealeii (Longfin inshore squid).